We begin with the raw amino-acid sequence, 411 residues long: 2,3-bisphosphoglycerate-independent phosphoglycerate mutase (411 aa).

The protein belongs to the BPG-independent phosphoglycerate mutase family. A-PGAM subfamily.

The enzyme catalyses (2R)-2-phosphoglycerate = (2R)-3-phosphoglycerate. The protein operates within carbohydrate degradation; glycolysis; pyruvate from D-glyceraldehyde 3-phosphate: step 3/5. Functionally, catalyzes the interconversion of 2-phosphoglycerate and 3-phosphoglycerate. This chain is 2,3-bisphosphoglycerate-independent phosphoglycerate mutase, found in Methanosphaerula palustris (strain ATCC BAA-1556 / DSM 19958 / E1-9c).